We begin with the raw amino-acid sequence, 171 residues long: Translation initiation factor IF-3 (171 aa).

Belongs to the IF-3 family. Monomer.

Its subcellular location is the cytoplasm. In terms of biological role, IF-3 binds to the 30S ribosomal subunit and shifts the equilibrium between 70S ribosomes and their 50S and 30S subunits in favor of the free subunits, thus enhancing the availability of 30S subunits on which protein synthesis initiation begins. This Halalkalibacterium halodurans (strain ATCC BAA-125 / DSM 18197 / FERM 7344 / JCM 9153 / C-125) (Bacillus halodurans) protein is Translation initiation factor IF-3.